The chain runs to 201 residues: L(+)-tartrate dehydratase subunit beta (201 aa).

Residue His-37 is part of the active site.

It belongs to the class-I fumarase family. As to quaternary structure, heterotetramer of two alpha and two beta subunits.

It carries out the reaction (2R,3R)-tartrate = oxaloacetate + H2O. The chain is L(+)-tartrate dehydratase subunit beta (ttdB) from Shigella sonnei (strain Ss046).